A 225-amino-acid chain; its full sequence is Uracil-DNA glycosylase (225 aa).

Asp-64 (proton acceptor) is an active-site residue.

The protein belongs to the uracil-DNA glycosylase (UDG) superfamily. UNG family.

The protein resides in the cytoplasm. It carries out the reaction Hydrolyzes single-stranded DNA or mismatched double-stranded DNA and polynucleotides, releasing free uracil.. Its function is as follows. Excises uracil residues from the DNA which can arise as a result of misincorporation of dUMP residues by DNA polymerase or due to deamination of cytosine. In Agathobacter rectalis (strain ATCC 33656 / DSM 3377 / JCM 17463 / KCTC 5835 / VPI 0990) (Eubacterium rectale), this protein is Uracil-DNA glycosylase.